A 356-amino-acid polypeptide reads, in one-letter code: Protein SEC13 homolog (356 aa).

WD repeat units lie at residues 11–50, 54–95, 101–142, 149–205, 210–253, and 259–298; these read EHEDMVHHAALDFYGLLLATCSSDGSVRIFHSRKNNKALA, GHQG…DWTK, NHDS…GVWD, AHTI…WVEE, AHSD…SEWT, and TFDDAVWSISWSTTGNILAVTGGDNNVTLWKENTEGQWIR. The interval 307-356 is disordered; the sequence is IQSKQPSHLPHSHSQQQQALQQHQQQAPSHPGPSSDSEHSSNLSNSQLSN. The span at 308–356 shows a compositional bias: low complexity; the sequence is QSKQPSHLPHSHSQQQQALQQHQQQAPSHPGPSSDSEHSSNLSNSQLSN.

It belongs to the WD repeat SEC13 family. Probable component of the nuclear pore complex (NPC). Component of the GATOR complex consisting of mio, Nup44A/Seh1, Im11, Nplr3, Nplr2, Wdr24, Wdr59 and Sec13. Within the GATOR complex, probable component of the GATOR2 subcomplex which is likely composed of mio, Nup44A/Seh1, Wdr24, Wdr59 and Sec13. Interacts with msk. Interacts (preferentially when phosphorylated) with Mad. The GATOR2 complex associates with unmet in the absence of S-adenosyl-L-methionine; the mio-Wdr24-Nup44A subcomplex is essential and sufficient for this interaction while Wdr59 and Sec13 are dispensable. This association acts as a nutrient sensor to inhibit mTORC1 signaling in the absence of methionine. Salivary glands.

It is found in the nucleus envelope. The protein resides in the nucleus. The protein localises to the nucleoplasm. Its subcellular location is the cytoplasm. It localises to the cytoskeleton. It is found in the microtubule organizing center. The protein resides in the centrosome. The protein localises to the nuclear pore complex. Its subcellular location is the cytoplasmic vesicle. It localises to the COPII-coated vesicle membrane. It is found in the endoplasmic reticulum membrane. The protein resides in the lysosome membrane. In terms of biological role, functions as a component of the nuclear pore complex (NPC) and the COPII coat. At the endoplasmic reticulum, SEC13 is involved in the biogenesis of COPII-coated vesicles. Recruited to transcriptionally active chromatin at the time of transcription initiation by RNA polymerase II. Required for proper expression of ecdysone-responsive genes such as Eip74EF and Eip75B during larval development. Required for reactivation of transcription after heat shock. Required for nuclear import of phosphorylated Mad via importin msk. Has no role in classical nuclear localization signal (cNLS)-dependent nuclear import via importin-beta. Its function is as follows. A component of the GATOR subcomplex GATOR2 which functions as an activator of the amino acid-sensing branch of the mTORC1 signaling pathway. The two GATOR subcomplexes, GATOR1 and GATOR2, regulate the mTORC1 pathway in order to mediate metabolic homeostasis, female gametogenesis and the response to amino acid limitation and complete starvation. GATOR2 activates the mTORC1 signaling pathway through the inhibition of the GATOR1 subcomplex, controlling the switch to cell proliferation and growth under nutrient replete conditions and during female oocyte development. This is Protein SEC13 homolog from Drosophila melanogaster (Fruit fly).